A 218-amino-acid polypeptide reads, in one-letter code: Putative glutamine transport system permease protein GlnP (218 aa).

Positions Thr19–Ala208 constitute an ABC transmembrane type-1 domain. 4 helical membrane-spanning segments follow: residues Tyr25–Val45, Phe57–Pro79, Phe86–Ile108, and Phe187–Ile207.

This sequence belongs to the binding-protein-dependent transport system permease family. HisMQ subfamily.

Its subcellular location is the cell inner membrane. Part of the binding-protein-dependent transport system for glutamine; probably responsible for the translocation of the substrate across the membrane. This is Putative glutamine transport system permease protein GlnP (glnP) from Rickettsia bellii (strain RML369-C).